A 486-amino-acid polypeptide reads, in one-letter code: NADH dehydrogenase [ubiquinone] flavoprotein 1, mitochondrial (486 aa).

A mitochondrion-targeting transit peptide spans M1 to F30. Low complexity predominate over residues S31–T40. Residues S31–G57 form a disordered region. The span at P41–P50 shows a compositional bias: pro residues. Position 110–119 (G110–G119) interacts with NADH. F222 to T270 provides a ligand contact to FMN. C402, C405, C408, and C448 together coordinate [4Fe-4S] cluster.

This sequence belongs to the complex I 51 kDa subunit family. In terms of assembly, complex I is composed of at least 49 different subunits. This is a component of the flavoprotein-sulfur (FP) fragment of the enzyme. The cofactor is FMN. Requires [4Fe-4S] cluster as cofactor.

It is found in the mitochondrion inner membrane. It catalyses the reaction a ubiquinone + NADH + 5 H(+)(in) = a ubiquinol + NAD(+) + 4 H(+)(out). Functionally, core subunit of the mitochondrial membrane respiratory chain NADH dehydrogenase (Complex I) that is believed to belong to the minimal assembly required for catalysis. Complex I functions in the transfer of electrons from NADH to the respiratory chain. The immediate electron acceptor for the enzyme is believed to be ubiquinone. The polypeptide is NADH dehydrogenase [ubiquinone] flavoprotein 1, mitochondrial (Arabidopsis thaliana (Mouse-ear cress)).